We begin with the raw amino-acid sequence, 212 residues long: uncharacterized protein (212 aa).

This is an uncharacterized protein from Acanthamoeba polyphaga (Amoeba).